Consider the following 283-residue polypeptide: Nucleotide-binding protein Hore_15880 (283 aa).

ATP is bound at residue 8–15 (GMSGAGKS). 57 to 60 (DIRG) is a binding site for GTP.

This sequence belongs to the RapZ-like family.

Displays ATPase and GTPase activities. This chain is Nucleotide-binding protein Hore_15880, found in Halothermothrix orenii (strain H 168 / OCM 544 / DSM 9562).